Here is a 1130-residue protein sequence, read N- to C-terminus: Alpha-mannosidase 2 (1130 aa).

The Cytoplasmic segment spans residues 1–14; that stretch reads MRTRVLRCRPFSTR. The helical; Signal-anchor for type II membrane protein transmembrane segment at 15–35 threads the bilayer; it reads ILLLLLFVLAFGVYCYFYNAS. Residues 36–1130 lie on the Lumenal side of the membrane; sequence PQNYNKPRIS…MEVKTYKIRF (1095 aa). N-linked (GlcNAc...) asparagine glycosylation occurs at N117. Residues H133 and D135 each contribute to the Zn(2+) site. N166 is a glycosylation site (N-linked (GlcNAc...) asparagine). Zn(2+) contacts are provided by D247 and H527. Catalysis depends on D247, which acts as the Nucleophile. N-linked (GlcNAc...) asparagine glycans are attached at residues N622, N683, N1056, and N1095.

This sequence belongs to the glycosyl hydrolase 38 family. In terms of assembly, homodimer; disulfide-linked. Requires Zn(2+) as cofactor. N-glycosylated.

It is found in the microsome membrane. The protein localises to the golgi apparatus membrane. It catalyses the reaction N(4)-{beta-D-GlcNAc-(1-&gt;2)-alpha-D-Man-(1-&gt;3)-[alpha-D-Man-(1-&gt;3)-[alpha-D-Man-(1-&gt;6)]-alpha-D-Man-(1-&gt;6)]-beta-D-Man-(1-&gt;4)-beta-D-GlcNAc-(1-&gt;4)-beta-D-GlcNAc}-L-asparaginyl-[protein] + 2 H2O = 2 alpha-D-mannopyranose + an N(4)-{beta-D-GlcNAc-(1-&gt;2)-alpha-D-Man-(1-&gt;3)-[alpha-D-Man-(1-&gt;6)]-beta-D-Man-(1-&gt;4)-beta-D-GlcNAc-(1-&gt;4)-beta-D-GlcNAc}-L-asparaginyl-[protein]. It functions in the pathway protein modification; protein glycosylation. Its activity is regulated as follows. Inhibited by swainsonine. Its function is as follows. Catalyzes the first committed step in the biosynthesis of complex N-glycans. It controls conversion of high mannose to complex N-glycans; the final hydrolytic step in the N-glycan maturation pathway. This is Alpha-mannosidase 2 from Spodoptera frugiperda (Fall armyworm).